The primary structure comprises 515 residues: GMP synthase [glutamine-hydrolyzing] (515 aa).

In terms of domain architecture, Glutamine amidotransferase type-1 spans 10–200 (TIIVLDFGSQ…VFGVCGCSEG (191 aa)). Cys87 functions as the Nucleophile in the catalytic mechanism. Catalysis depends on residues His174 and Glu176. Residues 201–390 (WNMENFIEVE…LGIPDEIVWR (190 aa)) enclose the GMPS ATP-PPase domain. Position 228–234 (228–234 (SGGVDSS)) interacts with ATP.

As to quaternary structure, homodimer.

It catalyses the reaction XMP + L-glutamine + ATP + H2O = GMP + L-glutamate + AMP + diphosphate + 2 H(+). It participates in purine metabolism; GMP biosynthesis; GMP from XMP (L-Gln route): step 1/1. Its function is as follows. Catalyzes the synthesis of GMP from XMP. This is GMP synthase [glutamine-hydrolyzing] from Bacillus anthracis (strain A0248).